A 140-amino-acid chain; its full sequence is Ubiquitin-like protein ATG12 (140 aa).

Residues 1–50 (MAEEPQSVLQLPTSIAAGGEGLTDVSPETTTPEPPSSAAVSPGTEEPAGD) form a disordered region. A compositionally biased stretch (low complexity) spans 25-42 (VSPETTTPEPPSSAAVSP). A Glycyl lysine isopeptide (Gly-Lys) (interchain with K-130 in ATG5) cross-link involves residue Gly140.

It belongs to the ATG12 family. Forms a conjugate with ATG5. Part of the minor complex composed of 4 sets of ATG12-ATG5 and ATG16L1 (400 kDa); this complex interacts with ATG3 leading to disruption of ATG7 interaction and promotion of ATG8-like proteins lipidation. Forms an 800-kDa complex composed of ATG12-ATG5 and ATG16L2. Interacts with DHX58/RIG-1, IFIH1/MDA5 and MAVS/IPS-1 in monomeric form as well as in ATG12-ATG5 conjugate. The interaction with MAVS is further enhanced upon vesicular stomatitis virus (VSV) infection. Interacts with ATG3; this interaction is essential for phosphatidylethanolamine (PE)-conjugated ATG8-like proteins formation. Interacts with ATG7. Interacts with ATG10. The ATG12-ATG5 conjugate interacts with RAB33A; this interaction is bridged by ATG16L1 and promotes ATG12-ATG5-ATG16L1 complex recruitment to phagophores. Interacts with TECPR1. Interacts with SH3BGRL. The ATG12-ATG5 conjugate interacts with PDCD6IP (via the BRO1 domain); this interaction is bridged by ATG12 and promotes multiple PDCD6IP-mediated functions such as endolysosomal trafficking, macroautophagy and exosome biogenesis. Post-translationally, acetylated by EP300. As to expression, ubiquitous.

Its subcellular location is the cytoplasm. The protein resides in the preautophagosomal structure membrane. In terms of biological role, ubiquitin-like protein involved in autophagy vesicles formation. Conjugation with ATG5 through a ubiquitin-like conjugating system involving also ATG7 as an E1-like activating enzyme and ATG10 as an E2-like conjugating enzyme, is essential for its function. The ATG12-ATG5 conjugate acts as an E3-like enzyme which is required for lipidation of ATG8 family proteins and their association to the vesicle membranes. As part of the ATG8 conjugation system with ATG5 and ATG16L1, required for recruitment of LRRK2 to stressed lysosomes and induction of LRRK2 kinase activity in response to lysosomal stress. (Microbial infection) May act as a proviral factor. In association with ATG5, negatively regulates the innate antiviral immune response by impairing the type I IFN production pathway upon vesicular stomatitis virus (VSV) infection. Required for the translation of incoming hepatitis C virus (HCV) RNA and, thereby, for the initiation of HCV replication, but not required once infection is established. The chain is Ubiquitin-like protein ATG12 from Homo sapiens (Human).